Consider the following 75-residue polypeptide: Transcription attenuation protein MtrB (75 aa).

It belongs to the MtrB family. In terms of assembly, oligomer of 11 identical subunits arranged in doughnut-like structure.

Its function is as follows. Required for transcription attenuation control in the trp operon. This trans-acting factor binds to trinucleotide repeats (GAG or UAG) located in the trp leader transcript causing transcription termination. Binds the leader RNA only in presence of L-tryptophan. This is Transcription attenuation protein MtrB (mtrB) from Bacillus subtilis (strain 168).